A 68-amino-acid chain; its full sequence is UPF0434 protein BURPS668_0926 (68 aa).

The protein belongs to the UPF0434 family.

This is UPF0434 protein BURPS668_0926 from Burkholderia pseudomallei (strain 668).